The following is a 221-amino-acid chain: MRCNGMSPVSVAQRNTGIWAVVPLKAPECAKTRLSGVLSHAARQALFFSMASHVIGTLRASPRIASLLVVTPSESTAEMARAAGAEILWGPPDEGMANACSRAMAHIAAAGGERVMFVPGDLPLLDGAAIDMLSRAPVDAIGMAPNRDGHGTNGLICRPGAIPLFFSGPSFSAHQNAARCAGIDVWIVRSREWALDVDLPADLEEFESSIKDAKRRVLCQI.

The protein belongs to the CofC family.

It carries out the reaction (2R)-3-phosphoglycerate + GTP + H(+) = 3-[(R)-glyceryl]-diphospho-5'-guanosine + diphosphate. The catalysed reaction is (2S)-2-phospholactate + GTP + H(+) = (2S)-lactyl-2-diphospho-5'-guanosine + diphosphate. It functions in the pathway cofactor biosynthesis; coenzyme F420 biosynthesis. Its function is as follows. Guanylyltransferase that catalyzes the activation of (2R)-3-phosphoglycerate (3PG) as 3-[(R)-glyceryl]-diphospho-5'-guanosine, via the condensation of 3PG with GTP. It is involved in the biosynthesis of a derivative of the hydride carrier cofactor coenzyme F420, 3PG-F420. Can also use (2S)-2-phospholactate (2-PL), with lower turnover, and has weak activity with phosphoenolpyruvate (PEP). This is 3-phospho-D-glycerate guanylyltransferase from Mycetohabitans rhizoxinica (strain DSM 19002 / CIP 109453 / HKI 454) (Paraburkholderia rhizoxinica).